The following is a 141-amino-acid chain: Nucleoside diphosphate kinase (141 aa).

Positions 11, 59, 87, 93, 104, and 114 each coordinate ATP. H117 (pros-phosphohistidine intermediate) is an active-site residue.

Belongs to the NDK family. In terms of assembly, homotetramer. It depends on Mg(2+) as a cofactor.

It is found in the cytoplasm. The catalysed reaction is a 2'-deoxyribonucleoside 5'-diphosphate + ATP = a 2'-deoxyribonucleoside 5'-triphosphate + ADP. It catalyses the reaction a ribonucleoside 5'-diphosphate + ATP = a ribonucleoside 5'-triphosphate + ADP. Its function is as follows. Major role in the synthesis of nucleoside triphosphates other than ATP. The ATP gamma phosphate is transferred to the NDP beta phosphate via a ping-pong mechanism, using a phosphorylated active-site intermediate. The protein is Nucleoside diphosphate kinase of Pseudomonas fluorescens (strain ATCC BAA-477 / NRRL B-23932 / Pf-5).